The following is a 242-amino-acid chain: Ubiquinone biosynthesis O-methyltransferase (242 aa).

Residues R44, G64, D85, and M129 each coordinate S-adenosyl-L-methionine.

The protein belongs to the methyltransferase superfamily. UbiG/COQ3 family.

It carries out the reaction a 3-demethylubiquinol + S-adenosyl-L-methionine = a ubiquinol + S-adenosyl-L-homocysteine + H(+). It catalyses the reaction a 3-(all-trans-polyprenyl)benzene-1,2-diol + S-adenosyl-L-methionine = a 2-methoxy-6-(all-trans-polyprenyl)phenol + S-adenosyl-L-homocysteine + H(+). The protein operates within cofactor biosynthesis; ubiquinone biosynthesis. In terms of biological role, O-methyltransferase that catalyzes the 2 O-methylation steps in the ubiquinone biosynthetic pathway. In Yersinia enterocolitica serotype O:8 / biotype 1B (strain NCTC 13174 / 8081), this protein is Ubiquinone biosynthesis O-methyltransferase.